The primary structure comprises 377 residues: Histidine protein methyltransferase 1 (377 aa).

This sequence belongs to the methyltransferase superfamily. METTL18 family.

It is found in the cytoplasm. The protein localises to the nucleus. It carries out the reaction L-histidyl-[protein] + S-adenosyl-L-methionine = N(tele)-methyl-L-histidyl-[protein] + S-adenosyl-L-homocysteine + H(+). Its function is as follows. Protein-histidine N-methyltransferase that mediates methylation of RPL3 at 'His-243'. Methylates ribosome-associated RPL3, but not free RPL3, thereby regulating 60S subunit assembly. In addition to RPL3, mediates His methylation of other proteins. In Saccharomyces cerevisiae (strain ATCC 204508 / S288c) (Baker's yeast), this protein is Histidine protein methyltransferase 1.